A 251-amino-acid chain; its full sequence is Probable transcriptional regulatory protein AAur_2300 (251 aa).

The protein belongs to the TACO1 family.

The protein localises to the cytoplasm. The polypeptide is Probable transcriptional regulatory protein AAur_2300 (Paenarthrobacter aurescens (strain TC1)).